A 346-amino-acid polypeptide reads, in one-letter code: MNQYIDFNSTIYPFPPKPAFLSKDEKKHYREKIKRLLKQQDAVMVAHYYTDPEIQALAEETGGCVADSLEMARFGNNHPASTLLVAGVRFMGETAKILNPEKRVLMPTLEAECSLDLGCPEKEFTQFCDDHPDRTVVVYANTSAAVKARADWVVTSSIAVELIDYLDSQGKKIIWAPDRHLGNYVRKQTGADILCWQGACIVHDEFKTQALIRVKGLHPDAAVLVHPESPQAVIDLADAVGSTSQLIKSAQSLPHQKLIVATDKGIFYKMQQACPEKQLFAAPTAGEGASCRSCAHCPWMAMNGLQAIVQGLEQGGGQHEILVEKELREKALVPLNRMLDFAAQLK.

Iminosuccinate-binding residues include histidine 47 and serine 68. Cysteine 113 contributes to the [4Fe-4S] cluster binding site. Residues 139 to 141 (YAN) and serine 156 each bind iminosuccinate. Cysteine 200 provides a ligand contact to [4Fe-4S] cluster. Iminosuccinate-binding positions include 226 to 228 (HPE) and threonine 243. Position 297 (cysteine 297) interacts with [4Fe-4S] cluster.

Belongs to the quinolinate synthase family. Type 1 subfamily. Requires [4Fe-4S] cluster as cofactor.

It is found in the cytoplasm. It carries out the reaction iminosuccinate + dihydroxyacetone phosphate = quinolinate + phosphate + 2 H2O + H(+). The protein operates within cofactor biosynthesis; NAD(+) biosynthesis; quinolinate from iminoaspartate: step 1/1. Its function is as follows. Catalyzes the condensation of iminoaspartate with dihydroxyacetone phosphate to form quinolinate. The protein is Quinolinate synthase of Photorhabdus laumondii subsp. laumondii (strain DSM 15139 / CIP 105565 / TT01) (Photorhabdus luminescens subsp. laumondii).